The primary structure comprises 435 residues: MNRRRRYTGSNPSLRRVLYRAHLGVALVAVFTAGLAVTLVGLLTLRAYADPNQQLIARSISYTVEAAVVFGDAQAAEESLALIASSEEVSSAIVYDRQGQTLASWHRESTGPLHLLEQQLAHWLLSAPTEQPILHDGQKIGSVEVKGSGGSLLRFLLTGFAGMVLCLLLTALGAFYLSRRLVRGIVGPLDQLAKVAHTVRRERDFEKRVPEAGIAELSQLGEDFNALLDELESWQARLQDENASLAHQAHHDSLTSLPNRAFFEGRLSRALRDANEHREQLAVLFIDSDRFKEINDRLGHAAGDTVLVNIAMRIRGQLRESDLVARLGGDEFAVLLAPLASGADALRIADNIIASMQAPIRLSDGSTVSTSLTIGIALYPEHADTPAALLHDADMAMYIAKRQARGSRRLAELNDPRILQEEKEIDSATPEAPPK.

Topologically, residues 1–22 (MNRRRRYTGSNPSLRRVLYRAH) are cytoplasmic. A helical transmembrane segment spans residues 23–43 (LGVALVAVFTAGLAVTLVGLL). The Periplasmic portion of the chain corresponds to 44-154 (TLRAYADPNQ…VKGSGGSLLR (111 aa)). Residues 155–175 (FLLTGFAGMVLCLLLTALGAF) form a helical membrane-spanning segment. Over 176 to 435 (YLSRRLVRGI…DSATPEAPPK (260 aa)) the chain is Cytoplasmic. The 54-residue stretch at 183–236 (RGIVGPLDQLAKVAHTVRRERDFEKRVPEAGIAELSQLGEDFNALLDELESWQA) folds into the HAMP domain. Residues 279 to 415 (EQLAVLFIDS…GSRRLAELND (137 aa)) enclose the GGDEF domain. Mg(2+) contacts are provided by Ser288 and Asp330. Asp330 functions as the Proton acceptor in the catalytic mechanism. Positions 413-426 (LNDPRILQEEKEID) are enriched in basic and acidic residues. A disordered region spans residues 413–435 (LNDPRILQEEKEIDSATPEAPPK).

Homodimer. Interacts with YfiR. Mg(2+) serves as cofactor. Phosphorylated at both Tyr residues and Ser/Thr residues. Dephosphorylated and inactivated by TpbA.

The protein localises to the cell inner membrane. The catalysed reaction is 2 GTP = 3',3'-c-di-GMP + 2 diphosphate. It participates in purine metabolism; 3',5'-cyclic di-GMP biosynthesis. With respect to regulation, activity is tightly controlled by YfiR, a small periplasmic protein, and the OmpA/Pal-like outer-membrane lipoprotein YfiB. Diguanylate cyclase activity is inhibited by the specific interaction of YfiR with the TpbB periplasmic domain and is activated by YfiB, which releases the YfiR-mediated repression through sequestration of YfiR to the outer membrane. Release of repression leads to a conformational shift in TpbB/YfiN that propagates through the PAS and transmembrane domains to switch the cytoplasmic HAMP domain from an inactive to an active conformation and activate the C-terminal catalytic GGDEF domain. Thus, TpbB/YfiN appears to function by switching between discrete inactive and active functional states depending on the presence or absence of bound YfiR. Activity is also controlled by dephosphorylation of the periplasmic domain by the tyrosine phosphatase TpbA. These two mechanisms of regulation could in principle work in parallel or as part of the same regulatory pathway. Does not undergo product feedback inhibition. Its function is as follows. Catalyzes the synthesis of cyclic-di-GMP (c-di-GMP) via the condensation of 2 GTP molecules. Functionally, part of the YfiB-TpbB-YfiR (or yfiBNR) system, encoding a tripartite signaling module that modulates intracellular c-di-GMP levels. The system is a key regulator of the small colony variant (SCV) phenotype, and plays an important role in biofilm formation and in vivo persistence. The c-di-GMP produced by TpbB/YfiN stimulates the production of the Pel and Psl exopolysaccharides, which promotes surface attachment, generates an SCV phenotype and confers resistance against phagocytosis. This Pseudomonas aeruginosa (strain ATCC 15692 / DSM 22644 / CIP 104116 / JCM 14847 / LMG 12228 / 1C / PRS 101 / PAO1) protein is Diguanylate cyclase TpbB.